The sequence spans 568 residues: Circadian clock protein KaiC2 (568 aa).

KaiC domains are found at residues 11–250 and 251–485; these read IKCP…SVSQ and ERIS…LTGT. A phosphoserine; by autocatalysis mark is found at S423 and S424.

It belongs to the KaiC family. Multimerizes, probably forming homohexamers, no interaction with KaiC1 or KaiC3 is seen.

It catalyses the reaction L-seryl-[protein] + ATP = O-phospho-L-seryl-[protein] + ADP + H(+). It carries out the reaction L-threonyl-[protein] + ATP = O-phospho-L-threonyl-[protein] + ADP + H(+). The catalysed reaction is ATP + H2O = ADP + phosphate + H(+). Autophosphorylates independently of KaiA. This is Circadian clock protein KaiC2 from Synechocystis sp. (strain ATCC 27184 / PCC 6803 / Kazusa).